The primary structure comprises 160 residues: MGVTKKPDLTDPVLRAKLAKGMGHNYYGEPAWPNDLLYIFPVVIFGTIACNVGLAVLEPSMIGEPANPFATPLEILPEWYFFPVFQILRTVPNKLLGVLLMAAVPAGLLTVPFLENVNKFQNPFRRPVATTVFLFGTVVALWLGIGAALPIDKSLTLGLF.

Transmembrane regions (helical) follow at residues 36-56 (LLYIFPVVIFGTIACNVGLAV), 95-115 (LLGVLLMAAVPAGLLTVPFLE), and 131-151 (TVFLFGTVVALWLGIGAALPI).

This sequence belongs to the cytochrome b family. PetD subfamily. The 4 large subunits of the cytochrome b6-f complex are cytochrome b6, subunit IV (17 kDa polypeptide, petD), cytochrome f and the Rieske protein, while the 4 small subunits are petG, petL, petM and petN. The complex functions as a dimer.

Its subcellular location is the plastid. It is found in the chloroplast thylakoid membrane. Its function is as follows. Component of the cytochrome b6-f complex, which mediates electron transfer between photosystem II (PSII) and photosystem I (PSI), cyclic electron flow around PSI, and state transitions. This Spirogyra maxima (Green alga) protein is Cytochrome b6-f complex subunit 4.